The primary structure comprises 61 residues: UPF0181 protein MS1074 (61 aa).

The protein belongs to the UPF0181 family.

This chain is UPF0181 protein MS1074, found in Mannheimia succiniciproducens (strain KCTC 0769BP / MBEL55E).